Here is a 178-residue protein sequence, read N- to C-terminus: Ribosome maturation factor RimP (178 aa).

It belongs to the RimP family.

It localises to the cytoplasm. In terms of biological role, required for maturation of 30S ribosomal subunits. In Mycolicibacterium gilvum (strain PYR-GCK) (Mycobacterium gilvum (strain PYR-GCK)), this protein is Ribosome maturation factor RimP.